A 310-amino-acid chain; its full sequence is GMP synthase [glutamine-hydrolyzing] subunit B (310 aa).

A GMPS ATP-PPase domain is found at 2–185 (FKTEPFIEES…LGLPDQIAHR (184 aa)). Position 29 to 35 (29 to 35 (SGGVDSS)) interacts with ATP.

As to quaternary structure, heterodimer composed of a glutamine amidotransferase subunit (A) and a GMP-binding subunit (B).

It carries out the reaction XMP + L-glutamine + ATP + H2O = GMP + L-glutamate + AMP + diphosphate + 2 H(+). It participates in purine metabolism; GMP biosynthesis; GMP from XMP (L-Gln route): step 1/1. Catalyzes the synthesis of GMP from XMP. The polypeptide is GMP synthase [glutamine-hydrolyzing] subunit B (Methanococcus maripaludis (strain C7 / ATCC BAA-1331)).